Reading from the N-terminus, the 275-residue chain is MANYTAADVKRLRELTGSGMMACKNALADADGDFDKAVEQLRIKGAKDVGKRAERTTAEGLVVAKDGVMIEINCETDFVAKNDEFIKLADEIVTVAAAGKPADLDALKALELDGKTIDTVIAEQSAKIGEKLELSRVASFDGPVAVYLHKRSSDLPPAVGVLIEYTGEGDAAAEAARGAAMQVAALKAKYVTRDEVPAEIVASERHIAEETARAEGKPEQALPKIIEGRVNGFFKDVVLTEQSSVTDSKKTVKAILDEAGVTIKRFVRFEVGASA.

Positions 76–79 (TDFV) are involved in Mg(2+) ion dislocation from EF-Tu.

Belongs to the EF-Ts family.

The protein resides in the cytoplasm. In terms of biological role, associates with the EF-Tu.GDP complex and induces the exchange of GDP to GTP. It remains bound to the aminoacyl-tRNA.EF-Tu.GTP complex up to the GTP hydrolysis stage on the ribosome. In Rhodococcus erythropolis (strain PR4 / NBRC 100887), this protein is Elongation factor Ts.